The sequence spans 291 residues: 33 kDa chaperonin (291 aa).

Disulfide bonds link Cys229-Cys231 and Cys262-Cys265.

This sequence belongs to the HSP33 family. Under oxidizing conditions two disulfide bonds are formed involving the reactive cysteines. Under reducing conditions zinc is bound to the reactive cysteines and the protein is inactive.

Its subcellular location is the cytoplasm. In terms of biological role, redox regulated molecular chaperone. Protects both thermally unfolding and oxidatively damaged proteins from irreversible aggregation. Plays an important role in the bacterial defense system toward oxidative stress. The chain is 33 kDa chaperonin from Vibrio parahaemolyticus serotype O3:K6 (strain RIMD 2210633).